Consider the following 3396-residue polypeptide: MFINIKSILWMCSTLIVTHALHKVKVGKSPPVRGSLSGKVSLPCHFSTMPTLPPSYNTSEFLRIKWSKIEVDKNGKDLKETTVLVAQNGNIKIGQDYKGRVSVPTHPEAVGDASLTVVKLLASDAGLYRCDVMYGIEDTQDTVSLTVDGVVFHYRAATSRYTLNFEAAQKACLDVGAVIATPEQLFAAYEDGFEQCDAGWLADQTVRYPIRAPRVGCYGDKMGKAGVRTYGFRSPQETYDVYCYVDHLDGDVFHLTVPSKFTFEEAAKECENQDARLATVGELQAAWRNGFDQCDYGWLSDASVRHPVTVARAQCGGGLLGVRTLYRFENQTGFPPPDSRFDAYCFKPKEATTIDLSILAETASPSLSKEPQMVSDRTTPIIPLVDELPVIPTEFPPVGNIVSFEQKATVQPQAITDSLATKLPTPTGSTKKPWDMDDYSPSASGPLGKLDISEIKEEVLQSTTGVSHYATDSWDGVVEDKQTQESVTQIEQIEVGPLVTSMEILKHIPSKEFPVTETPLVTARMILESKTEKKMVSTVSELVTTGHYGFTLGEEDDEDRTLTVGSDESTLIFDQIPEVITVSKTSEDTIHTHLEDLESVSASTTVSPLIMPDNNGSSMDDWEERQTSGRITEEFLGKYLSTTPFPSQHRTEIELFPYSGDKILVEGISTVIYPSLQTEMTHRRERTETLIPEMRTDTYTDEIQEEITKSPFMGKTEEEVFSGMKLSTSLSEPIHVTESSVEMTKSFDFPTLITKLSAEPTEVRDMEEDFTATPGTTKYDENITTVLLAHGTLSVEAATVSKWSWDEDNTTSKPLESTEPSASSKLPPALLTTVGMNGKDKDIPSFTEDGADEFTLIPDSTQKQLEEVTDEDIAAHGKFTIRFQPTTSTGIAEKSTLRDSTTEEKVPPITSTEGQVYATMEGSALGEVEDVDLSKPVSTVPQFAHTSEVEGLAFVSYSSTQEPTTYVDSSHTIPLSVIPKTDWGVLVPSVPSEDEVLGEPSQDILVIDQTRLEATISPETMRTTKITEGTTQEEFPWKEQTAEKPVPALSSTAWTPKEAVTPLDEQEGDGSAYTVSEDELLTGSERVPVLETTPVGKIDHSVSYPPGAVTEHKVKTDEVVTLTPRIGPKVSLSPGPEQKYETEGSSTTGFTSSLSPFSTHITQLMEETTTEKTSLEDIDLGSGLFEKPKATELIEFSTIKVTVPSDITTAFSSVDRLHTTSAFKPSSAITKKPPLIDREPGEETTSDMVIIGESTSHVPPTTLEDIVAKETETDIDREYFTTSSPPATQPTRPPTVEDKEAFGPQALSTPQPPASTKFHPDINVYIIEVRENKTGRMSDLSVIGHPIDSESKEDEPCSEETDPVHDLMAEILPEFPDIIEIDLYHSEENEEEEEECANATDVTTTPSVQYINGKHLVTTVPKDPEAAEARRGQFESVAPSQNFSDSSESDTHPFVIAKTELSTAVQPNESTETTESLEVTWKPETYPETSEHFSGGEPDVFPTVPFHEEFESGTAKKGAESVTERDTEVGHQAHEHTEPVSLFPEESSGEIAIDQESQKIAFARATEVTFGEEVEKSTSVTYTPTIVPSSASAYVSEEEAVTLIGNPWPDDLLSTKESWVEATPRQVVELSGSSSIPITEGSGEAEEDEDTMFTMVTDLSQRNTTDTLITLDTSRIITESFFEVPATTIYPVSEQPSAKVVPTKFVSETDTSEWISSTTVEEKKRKEEEGTTGTASTFEVYSSTQRSDQLILPFELESPNVATSSDSGTRKSFMSLTTPTQSEREMTDSTPVFTETNTLENLGAQTTEHSSIHQPGVQEGLTTLPRSPASVFMEQGSGEAAADPETTTVSSFSLNVEYAIQAEKEVAGTLSPHVETTFSTEPTGLVLSTVMDRVVAENITQTSREIVISERLGEPNYGAEIRGFSTGFPLEEDFSGDFREYSTVSHPIAKEETVMMEGSGDAAFRDTQTSPSTVPTSVHISHISDSEGPSSTMVSTSAFPWEEFTSSAEGSGEQLVTVSSSVVPVLPSAVQKFSGTASSIIDEGLGEVGTVNEIDRRSTILPTAEVEGTKAPVEKEEVKVSGTVSTNFPQTIEPAKLWSRQEVNPVRQEIESETTSEEQIQEEKSFESPQNSPATEQTIFDSQTFTETELKTTDYSVLTTKKTYSDDKEMKEEDTSLVNMSTPDPDANGLESYTTLPEATEKSHFFLATALVTESIPAEHVVTDSPIKKEESTKHFPKGMRPTIQESDTELLFSGLGSGEEVLPTLPTESVNFTEVEQINNTLYPHTSQVESTSSDKIEDFNRMENVAKEVGPLVSQTDIFEGSGSVTSTTLIEILSDTGAEGPTVAPLPFSTDIGHPQNQTVRWAEEIQTSRPQTITEQDSNKNSSTAEINETTTSSTDFLARAYGFEMAKEFVTSAPKPSDLYYEPSGEGSGEVDIVDSFHTSATTQATRQESSTTFVSDGSLEKHPEVPSAKAVTADGFPTVSVMLPLHSEQNKSSPDPTSTLSNTVSYERSTDGSFQDRFREFEDSTLKPNRKKPTENIIIDLDKEDKDLILTITESTILEILPELTSDKNTIIDIDHTKPVYEDILGMQTDIDTEVPSEPHDSNDESNDDSTQVQEIYEAAVNLSLTEETFEGSADVLASYTQATHDESMTYEDRSQLDHMGFHFTTGIPAPSTETELDVLLPTATSLPIPRKSATVIPEIEGIKAEAKALDDMFESSTLSDGQAIADQSEIIPTLGQFERTQEEYEDKKHAGPSFQPEFSSGAEEALVDHTPYLSIATTHLMDQSVTEVPDVMEGSNPPYYTDTTLAVSTFAKLSSQTPSSPLTIYSGSEASGHTEIPQPSALPGIDVGSSVMSPQDSFKEIHVNIEATFKPSSEEYLHITEPPSLSPDTKLEPSEDDGKPELLEEMEASPTELIAVEGTEILQDFQNKTDGQVSGEAIKMFPTIKTPEAGTVITTADEIELEGATQWPHSTSASATYGVEAGVVPWLSPQTSERPTLSSSPEINPETQAALIRGQDSTIAASEQQVAARILDSNDQATVNPVEFNTEVATPPFSLLETSNETDFLIGINEESVEGTAIYLPGPDRCKMNPCLNGGTCYPTETSYVCTCVPGYSGDQCELDFDECHSNPCRNGATCVDGFNTFRCLCLPSYVGALCEQDTETCDYGWHKFQGQCYKYFAHRRTWDAAERECRLQGAHLTSILSHEEQMFVNRVGHDYQWIGLNDKMFEHDFRWTDGSTLQYENWRPNQPDSFFSAGEDCVVIIWHENGQWNDVPCNYHLTYTCKKGTVACGQPPVVENAKTFGKMKPRYEINSLIRYHCKDGFIQRHLPTIRCLGNGRWAIPKITCMNPSAYQRTYSMKYFKNSSSAKDNSINTSKHDHRWSRRWQESRR.

Positions M1–A20 are cleaved as a signal peptide. Positions L21–T146 constitute an Ig-like V-type domain. Disulfide bonds link C44/C130, C172/C243, C196/C217, C270/C345, and C294/C315. The N-linked (GlcNAc...) asparagine glycan is linked to N57. Link domains lie at V150–V245 and D251–K347. N330 is a glycosylation site (N-linked (GlcNAc...) asparagine). The interval P348–G1335 is GAG-alpha (glucosaminoglycan attachment domain). The span at A420–T430 shows a compositional bias: polar residues. Disordered stretches follow at residues A420–Y439 and S603–W622. A glycan (N-linked (GlcNAc...) asparagine) is linked at N615. An O-linked (Xyl...) (chondroitin sulfate) serine glycan is attached at S659. Residues N782 and N809 are each glycosylated (N-linked (GlcNAc...) asparagine). Disordered regions lie at residues E807 to A829, I1126 to L1154, and R1277 to T1316. Residues T811–S824 show a composition bias toward polar residues. The segment covering E1143–L1154 has biased composition (low complexity). N1332 and N1398 each carry an N-linked (GlcNAc...) asparagine glycan. The segment at R1336–G3089 is GAG-beta. 2 disordered regions span residues V1420–E1497 and F1510–P1539. Residues K1422 to Q1433 show a composition bias toward basic and acidic residues. N-linked (GlcNAc...) asparagine glycosylation is found at N1442 and N1468. Residues E1469–T1480 are compositionally biased toward low complexity. Residues K1517–E1538 are compositionally biased toward basic and acidic residues. O-linked (Xyl...) (chondroitin sulfate) serine glycosylation is found at S1548 and S1631. A glycan (N-linked (GlcNAc...) asparagine) is linked at N1663. 2 disordered regions span residues S1717–T1737 and P1759–S1789. Residues V1720–E1729 are compositionally biased toward basic and acidic residues. Positions N1760 to Q1781 are enriched in polar residues. N1898 is a glycosylation site (N-linked (GlcNAc...) asparagine). O-linked (Xyl...) (chondroitin sulfate) serine glycans are attached at residues S1935 and S1959. Disordered stretches follow at residues A1962–V1994, R2107–A2134, and K2168–N2188. A compositionally biased stretch (low complexity) spans T1969–V1978. Over residues E2111–I2120 the composition is skewed to acidic residues. S2116 carries the post-translational modification Phosphoserine; by FAM20C. N2179 carries N-linked (GlcNAc...) asparagine glycosylation. O-linked (Xyl...) (chondroitin sulfate) serine glycans are attached at residues S2247 and S2254. 5 N-linked (GlcNAc...) asparagine glycosylation sites follow: N2272, N2280, N2360, N2385, and N2392. Disordered regions lie at residues T2371 to T2396, S2445 to S2473, S2493 to G2518, and D2598 to T2617. Composition is skewed to polar residues over residues S2445–S2461 and N2496–E2513. A glycan (N-linked (GlcNAc...) asparagine) is linked at N2496. Position 2608 is a phosphoserine (S2608). T2617 carries the post-translational modification Phosphothreonine. N-linked (GlcNAc...) asparagine glycosylation is present at N2628. S2722, S2723, and S2767 each carry an O-linked (Xyl...) (chondroitin sulfate) serine glycan. Disordered regions lie at residues G2834–S2856 and E2881–G2905. Residues T2896–G2905 are compositionally biased toward basic and acidic residues. Residue N2934 is glycosylated (N-linked (GlcNAc...) asparagine). S2941 carries O-linked (Xyl...) (chondroitin sulfate) serine glycosylation. Residue N3067 is glycosylated (N-linked (GlcNAc...) asparagine). Residues G3089–E3125 form the EGF-like 1 domain. Intrachain disulfides connect C3093–C3104, C3098–C3113, C3115–C3124, C3131–C3142, C3136–C3151, C3153–C3162, C3169–C3180, C3197–C3289, C3265–C3281, C3296–C3339, and C3325–C3352. The EGF-like 2; calcium-binding domain occupies D3127–E3163. One can recognise a C-type lectin domain in the interval F3176–K3290. The 61-residue stretch at V3294–N3354 folds into the Sushi domain. N-linked (GlcNAc...) asparagine glycosylation is found at N3369 and N3379. A compositionally biased stretch (polar residues) spans S3371 to T3380. Positions S3371–R3396 are disordered.

It belongs to the aggrecan/versican proteoglycan family. Interacts with FBLN1. In terms of processing, phosphorylated by FAM20C in the extracellular medium. Proteolytically cleaved by ADAMTS5 and ADAMTS15 in the pericellular matrix surrounding myoblasts, facilitating myoblast contact and fusion which is required for skeletal muscle development and regeneration. In terms of tissue distribution, detected in placenta (at protein level). Detected in cerebrospinal fluid, fibroblasts and urine (at protein level). Expressed in the retina (at protein level). Cerebral white matter and plasma. Isoform V0: Expressed in normal brain, gliomas, medulloblastomas, schwannomas, neurofibromas, and meningiomas. Isoform V1: Expressed in normal brain, gliomas, medulloblastomas, schwannomas, neurofibromas, and meningiomas. Isoform V2: Restricted to normal brain and gliomas. Isoform V3: Found in all these tissues except medulloblastomas.

It is found in the secreted. Its subcellular location is the extracellular space. The protein resides in the extracellular matrix. The protein localises to the cell projection. It localises to the cilium. It is found in the photoreceptor outer segment. Its subcellular location is the interphotoreceptor matrix. May play a role in intercellular signaling and in connecting cells with the extracellular matrix. May take part in the regulation of cell motility, growth and differentiation. Binds hyaluronic acid. In Homo sapiens (Human), this protein is Versican core protein (VCAN).